Here is a 445-residue protein sequence, read N- to C-terminus: Histidinol dehydrogenase (445 aa).

3 residues coordinate NAD(+): tyrosine 138, glutamine 199, and asparagine 222. Positions 245, 267, and 270 each coordinate substrate. Glutamine 267 and histidine 270 together coordinate Zn(2+). Active-site proton acceptor residues include glutamate 335 and histidine 336. Residues histidine 336, aspartate 369, glutamate 423, and histidine 428 each contribute to the substrate site. Aspartate 369 contributes to the Zn(2+) binding site. Zn(2+) is bound at residue histidine 428.

This sequence belongs to the histidinol dehydrogenase family. Requires Zn(2+) as cofactor.

It catalyses the reaction L-histidinol + 2 NAD(+) + H2O = L-histidine + 2 NADH + 3 H(+). Its pathway is amino-acid biosynthesis; L-histidine biosynthesis; L-histidine from 5-phospho-alpha-D-ribose 1-diphosphate: step 9/9. Catalyzes the sequential NAD-dependent oxidations of L-histidinol to L-histidinaldehyde and then to L-histidine. In Burkholderia pseudomallei (strain 1710b), this protein is Histidinol dehydrogenase.